A 219-amino-acid polypeptide reads, in one-letter code: Cytidylate kinase (219 aa).

Residue 15 to 23 (GPAASGKGT) coordinates ATP.

The protein belongs to the cytidylate kinase family. Type 1 subfamily.

The protein resides in the cytoplasm. The catalysed reaction is CMP + ATP = CDP + ADP. It catalyses the reaction dCMP + ATP = dCDP + ADP. This Brucella melitensis biotype 1 (strain ATCC 23456 / CCUG 17765 / NCTC 10094 / 16M) protein is Cytidylate kinase.